Consider the following 160-residue polypeptide: Phosphopantetheine adenylyltransferase (160 aa).

Ser-9 is a substrate binding site. Residues 9 to 10 (SF) and His-17 contribute to the ATP site. Residues Lys-41, Thr-73, and Arg-87 each coordinate substrate. ATP-binding positions include 88-90 (GMR), Glu-98, and 123-129 (YTFFSSS).

The protein belongs to the bacterial CoaD family. Homohexamer. Mg(2+) is required as a cofactor.

It localises to the cytoplasm. It catalyses the reaction (R)-4'-phosphopantetheine + ATP + H(+) = 3'-dephospho-CoA + diphosphate. It participates in cofactor biosynthesis; coenzyme A biosynthesis; CoA from (R)-pantothenate: step 4/5. Reversibly transfers an adenylyl group from ATP to 4'-phosphopantetheine, yielding dephospho-CoA (dPCoA) and pyrophosphate. This Roseiflexus sp. (strain RS-1) protein is Phosphopantetheine adenylyltransferase.